Consider the following 151-residue polypeptide: Cytochrome c-type biogenesis protein CcmE (151 aa).

The Cytoplasmic segment spans residues 1–8; it reads MNPQRKKR. Residues 9–29 form a helical; Signal-anchor for type II membrane protein membrane-spanning segment; that stretch reads LLLIVGLLVGVGVAVGFALSA. At 30 to 151 the chain is on the periplasmic side; it reads LQQNINLFYT…QAAAGGETKP (122 aa). Heme-binding residues include H124 and Y128.

The protein belongs to the CcmE/CycJ family.

The protein localises to the cell inner membrane. In terms of biological role, heme chaperone required for the biogenesis of c-type cytochromes. Transiently binds heme delivered by CcmC and transfers the heme to apo-cytochromes in a process facilitated by CcmF and CcmH. The polypeptide is Cytochrome c-type biogenesis protein CcmE (Pseudomonas putida (strain ATCC 700007 / DSM 6899 / JCM 31910 / BCRC 17059 / LMG 24140 / F1)).